We begin with the raw amino-acid sequence, 358 residues long: Protein IncC (358 aa).

A disordered region spans residues 1-101 (MGAIHEETAN…VGSRRQEETG (101 aa)). Residues 88–99 (HRQEVGSRRQEE) show a composition bias toward basic and acidic residues.

This sequence belongs to the ParA family.

In terms of biological role, this is one of the proteins encoded by the trfB operon; it is involved in plasmid maintenance and replication. This chain is Protein IncC (incC), found in Escherichia coli.